The chain runs to 283 residues: Orotidine 5'-phosphate decarboxylase (283 aa).

Lysine 97 functions as the Proton donor in the catalytic mechanism.

Belongs to the OMP decarboxylase family. Type 2 subfamily.

It carries out the reaction orotidine 5'-phosphate + H(+) = UMP + CO2. It participates in pyrimidine metabolism; UMP biosynthesis via de novo pathway; UMP from orotate: step 2/2. The protein is Orotidine 5'-phosphate decarboxylase of Clostridium botulinum (strain Okra / Type B1).